The sequence spans 408 residues: Endo-1,4-beta-xylanase A (408 aa).

A signal peptide spans 1-19 (MKLSASFAALALLLPFVQA). The 36-residue stretch at 20-55 (QSPVWGQCGGIGWTGPTTCTAGNVCQEYSAYYSQCI) folds into the CBM1 domain. Residues 64 to 89 (TSVSTAPNPPPTSHTSTSSAPSGAST) are disordered. The segment covering 76-89 (SHTSTSSAPSGAST) has biased composition (low complexity). In terms of domain architecture, GH10 spans 88–405 (STSTAKLNTL…KPAYDGIAIG (318 aa)). E222 functions as the Proton donor in the catalytic mechanism. E327 (nucleophile) is an active-site residue. A disulfide bond links C355 and C361.

This sequence belongs to the glycosyl hydrolase 10 (cellulase F) family.

Its subcellular location is the secreted. It catalyses the reaction Endohydrolysis of (1-&gt;4)-beta-D-xylosidic linkages in xylans.. Its pathway is glycan degradation; xylan degradation. Its function is as follows. Endo-1,4-beta-xylanase involved in the hydrolysis of xylan, a major structural heterogeneous polysaccharide found in plant biomass representing the second most abundant polysaccharide in the biosphere, after cellulose. This chain is Endo-1,4-beta-xylanase A (xynA), found in Phanerodontia chrysosporium (White-rot fungus).